A 274-amino-acid polypeptide reads, in one-letter code: Ribosomal RNA small subunit methyltransferase A (274 aa).

S-adenosyl-L-methionine-binding residues include asparagine 20, leucine 22, glycine 47, glutamate 68, aspartate 90, and asparagine 110.

This sequence belongs to the class I-like SAM-binding methyltransferase superfamily. rRNA adenine N(6)-methyltransferase family. RsmA subfamily.

Its subcellular location is the cytoplasm. The catalysed reaction is adenosine(1518)/adenosine(1519) in 16S rRNA + 4 S-adenosyl-L-methionine = N(6)-dimethyladenosine(1518)/N(6)-dimethyladenosine(1519) in 16S rRNA + 4 S-adenosyl-L-homocysteine + 4 H(+). Its function is as follows. Specifically dimethylates two adjacent adenosines (A1518 and A1519) in the loop of a conserved hairpin near the 3'-end of 16S rRNA in the 30S particle. May play a critical role in biogenesis of 30S subunits. The sequence is that of Ribosomal RNA small subunit methyltransferase A from Chlorobaculum parvum (strain DSM 263 / NCIMB 8327) (Chlorobium vibrioforme subsp. thiosulfatophilum).